Consider the following 634-residue polypeptide: Dynein axonemal assembly factor 1 (634 aa).

The interval 1–80 is disordered; the sequence is MHPEVSEPPV…SRDDREDRGP (80 aa). Residues 22–42 show a composition bias toward basic and acidic residues; it reads AGDHGDAGPGIRKEEISETKE. Residues 48 to 62 show a composition bias toward polar residues; it reads CTTSCPSQQQPSGDN. The segment covering 70-80 has biased composition (basic and acidic residues); that stretch reads HSRDDREDRGP. LRR repeat units follow at residues 101-123, 124-145, 146-167, 168-189, 190-211, and 215-236; these read ALND…EEYT, GLRC…QAQS, ELRC…EPLQ, KLDA…SCLP, VLNT…EHLR, and RLCV…SVLE. Residues 249 to 288 form the LRRCT domain; the sequence is NPVTKHIPNYRRTVTVRLKHLTYLDDRPVFPKDRACAEAW. A compositionally biased stretch (basic and acidic residues) spans 326–336; that stretch reads EERKKARDRGE. Residues 326-358 form a disordered region; sequence EERKKARDRGETPLPDSEGSIPTSPEAEEKQPM. Ser-349 is subject to Phosphoserine. The residue at position 462 (Thr-462) is a Phosphothreonine. A phosphoserine mark is found at Ser-465 and Ser-488. 2 disordered regions span residues 481 to 505 and 559 to 634; these read ISSL…ATPT and ELND…FGLD.

Belongs to the DNAAF1 family.

It localises to the cell projection. The protein localises to the cilium. Its function is as follows. Cilium-specific protein required for the stability of the ciliary architecture. Plays a role in cytoplasmic preassembly of dynein arms. Involved in regulation of microtubule-based cilia and actin-based brush border microvilli. This chain is Dynein axonemal assembly factor 1 (Dnaaf1), found in Mus musculus (Mouse).